The primary structure comprises 151 residues: Ribonuclease H (151 aa).

The RNase H type-1 domain occupies 1-141 (MKHVDIFTDG…ADELARKGME (141 aa)). D9, E47, D69, and D133 together coordinate Mg(2+).

It belongs to the RNase H family. Monomer. The cofactor is Mg(2+).

It is found in the cytoplasm. It carries out the reaction Endonucleolytic cleavage to 5'-phosphomonoester.. Endonuclease that specifically degrades the RNA of RNA-DNA hybrids. This is Ribonuclease H from Rhizobium johnstonii (strain DSM 114642 / LMG 32736 / 3841) (Rhizobium leguminosarum bv. viciae).